An 84-amino-acid polypeptide reads, in one-letter code: MGKEERYTKKPKPDDRSDNVEKLQEMIHNTIENYREAEDYLKLHAEELSPEEIERIKEKNRNRLISIQNMRQEIIDEVHDRERR.

The interval 1-20 (MGKEERYTKKPKPDDRSDNV) is disordered.

Belongs to the Tlp family.

This chain is Protein Tlp homolog, found in Caldanaerobacter subterraneus subsp. tengcongensis (strain DSM 15242 / JCM 11007 / NBRC 100824 / MB4) (Thermoanaerobacter tengcongensis).